The chain runs to 253 residues: LexA repressor (253 aa).

The tract at residues 1 to 33 is disordered; that stretch reads MTSQGRGTRRGGARGNVRAFPENPADAAGLTPR. The H-T-H motif DNA-binding region spans 54 to 74; sequence VREIGEAVGLTSTSSVAHQLK. Catalysis depends on for autocatalytic cleavage activity residues serine 177 and lysine 214.

The protein belongs to the peptidase S24 family. Homodimer.

It catalyses the reaction Hydrolysis of Ala-|-Gly bond in repressor LexA.. Functionally, represses a number of genes involved in the response to DNA damage (SOS response), including recA and lexA. In the presence of single-stranded DNA, RecA interacts with LexA causing an autocatalytic cleavage which disrupts the DNA-binding part of LexA, leading to derepression of the SOS regulon and eventually DNA repair. This Frankia alni (strain DSM 45986 / CECT 9034 / ACN14a) protein is LexA repressor.